The primary structure comprises 261 residues: tRNA (guanine-N(7)-)-methyltransferase (261 aa).

Residues E75, E100, D127, and D150 each contribute to the S-adenosyl-L-methionine site. The active site involves D150. Position 154 (K154) interacts with substrate. The interval 156 to 161 (RHNKRR) is interaction with RNA. Residues D186 and 223-226 (THFE) each bind substrate.

It belongs to the class I-like SAM-binding methyltransferase superfamily. TrmB family.

It catalyses the reaction guanosine(46) in tRNA + S-adenosyl-L-methionine = N(7)-methylguanosine(46) in tRNA + S-adenosyl-L-homocysteine. It functions in the pathway tRNA modification; N(7)-methylguanine-tRNA biosynthesis. In terms of biological role, catalyzes the formation of N(7)-methylguanine at position 46 (m7G46) in tRNA. In Xanthomonas axonopodis pv. citri (strain 306), this protein is tRNA (guanine-N(7)-)-methyltransferase.